A 570-amino-acid chain; its full sequence is MIPPEIRRSVLLQKAIKLALAGTLLTFASFSATAADPSSDTETPQPPDILLGPLFNDVQNAKLFPDQKTFADAIPNSDPLMILADYRMQRNQSGFDLRHFVDVNFTLPKAGEKYVPPAGQSLREHIDGLWPVLTRSTKNVEKWDSLLPLPESYVVPGGRFREIYYWDSYFTMLGLAESGHWDKVADMVANFGYEIDAWGHIPNGNRTYYLSRSQPPFFAFMVELLAQHEGDDALKEYLPQLQKEYAYWMEGVETLQPGQQNQRVVKLEDGSVLNRYWDDRDTPRPESWVEDIATAKSNPNRPATEIYRDLRSAAASGWDFSSRWMDNPQQLSTIRTTTIVPVDLNALLYQLEKTLARASAAAGDRAKASQYDALANARQKAIEMHLWNNKEGWYADYDLQNNKIRDQLTAAALFPLYVNAAAKDRAVKVAAAAQAHLLQPGGLATTSVKSGQQWDAPNGWAPLQWVAAEGLQNYGQDDVAMEVTWRFLTNVQHTYDREKKLVEKYDVSSTGTGGGGGEYPLQDGFGWTNGVTLKMLDLICPQEKPCDSVPSTRPASLSATPTKTPSAATQ.

An N-terminal signal peptide occupies residues M1–A34. Substrate-binding positions include R159, W166–D167, N203, R212–Q214, R284–E286, and G317. Residues D319 and E503 each act as proton donor/acceptor in the active site. Substrate is bound at residue E518. Residues K544 to Q570 form a disordered region. Residues P554–Q570 show a composition bias toward low complexity.

Belongs to the glycosyl hydrolase 37 family. In terms of assembly, monomer.

It is found in the periplasm. It catalyses the reaction alpha,alpha-trehalose + H2O = alpha-D-glucose + beta-D-glucose. In terms of biological role, provides the cells with the ability to utilize trehalose at high osmolarity by splitting it into glucose molecules that can subsequently be taken up by the phosphotransferase-mediated uptake system. The polypeptide is Periplasmic trehalase (Salmonella paratyphi A (strain AKU_12601)).